The chain runs to 192 residues: Orotate phosphoribosyltransferase (192 aa).

A 5-phospho-alpha-D-ribose 1-diphosphate-binding site is contributed by 116 to 124 (EDIVTTGLS). Residues Thr-120 and Arg-148 each coordinate orotate.

This sequence belongs to the purine/pyrimidine phosphoribosyltransferase family. PyrE subfamily. Homodimer. The cofactor is Mg(2+).

It carries out the reaction orotidine 5'-phosphate + diphosphate = orotate + 5-phospho-alpha-D-ribose 1-diphosphate. It functions in the pathway pyrimidine metabolism; UMP biosynthesis via de novo pathway; UMP from orotate: step 1/2. Its function is as follows. Catalyzes the transfer of a ribosyl phosphate group from 5-phosphoribose 1-diphosphate to orotate, leading to the formation of orotidine monophosphate (OMP). This Brucella anthropi (strain ATCC 49188 / DSM 6882 / CCUG 24695 / JCM 21032 / LMG 3331 / NBRC 15819 / NCTC 12168 / Alc 37) (Ochrobactrum anthropi) protein is Orotate phosphoribosyltransferase.